A 466-amino-acid chain; its full sequence is Asparagine--tRNA ligase (466 aa).

The protein belongs to the class-II aminoacyl-tRNA synthetase family. Homodimer.

It localises to the cytoplasm. The enzyme catalyses tRNA(Asn) + L-asparagine + ATP = L-asparaginyl-tRNA(Asn) + AMP + diphosphate + H(+). The sequence is that of Asparagine--tRNA ligase from Shewanella oneidensis (strain ATCC 700550 / JCM 31522 / CIP 106686 / LMG 19005 / NCIMB 14063 / MR-1).